An 864-amino-acid polypeptide reads, in one-letter code: Alanine--tRNA ligase (864 aa).

Residues His553, His557, Cys655, and His659 each contribute to the Zn(2+) site. Residues 828-847 (VGGKGGGRPDMAQAGGKDPS) form a disordered region.

This sequence belongs to the class-II aminoacyl-tRNA synthetase family. The cofactor is Zn(2+).

Its subcellular location is the cytoplasm. It catalyses the reaction tRNA(Ala) + L-alanine + ATP = L-alanyl-tRNA(Ala) + AMP + diphosphate. Its function is as follows. Catalyzes the attachment of alanine to tRNA(Ala) in a two-step reaction: alanine is first activated by ATP to form Ala-AMP and then transferred to the acceptor end of tRNA(Ala). Also edits incorrectly charged Ser-tRNA(Ala) and Gly-tRNA(Ala) via its editing domain. The polypeptide is Alanine--tRNA ligase (Hydrogenovibrio crunogenus (strain DSM 25203 / XCL-2) (Thiomicrospira crunogena)).